Reading from the N-terminus, the 570-residue chain is Periplasmic trehalase (570 aa).

Positions 1-34 (MIPPEIRRSVLLQKAIKLALAGTLLTFASFSATA) are cleaved as a signal peptide. Substrate-binding positions include Arg159, 166-167 (WD), Asn203, 212-214 (RSQ), 284-286 (RPE), and Gly317. Residues Asp319 and Glu503 each act as proton donor/acceptor in the active site. Glu518 provides a ligand contact to substrate. Residues 544–570 (KPCDSVPSTRPASLSATPTKTPSAATQ) form a disordered region. The span at 554 to 570 (PASLSATPTKTPSAATQ) shows a compositional bias: low complexity.

The protein belongs to the glycosyl hydrolase 37 family. Monomer.

Its subcellular location is the periplasm. The catalysed reaction is alpha,alpha-trehalose + H2O = alpha-D-glucose + beta-D-glucose. Functionally, provides the cells with the ability to utilize trehalose at high osmolarity by splitting it into glucose molecules that can subsequently be taken up by the phosphotransferase-mediated uptake system. This chain is Periplasmic trehalase, found in Salmonella choleraesuis (strain SC-B67).